The following is a 334-amino-acid chain: Cytoskeleton protein RodZ (334 aa).

Over 1 to 111 (MNTEATHDQN…LGKRRKKRDG (111 aa)) the chain is Cytoplasmic. The HTH cro/C1-type domain maps to 19–71 (LRNAREQLGLSQQAVAERLCLKVSTVRDIEEDKAPSDLASTFLRGYIRSYARL). Positions 30–49 (QQAVAERLCLKVSTVRDIEE) form a DNA-binding region, H-T-H motif. The helical; Signal-anchor for type II membrane protein transmembrane segment at 112–132 (WLMSFTWLVLFVVVGLTGAWW) threads the bilayer. Residues 133–334 (WQNHKAQQEE…TLNAEPTPAQ (202 aa)) lie on the Periplasmic side of the membrane. Positions 155 to 241 (NADKDSGQSV…PSALPTSQAG (87 aa)) are disordered. The segment covering 161–175 (GQSVPLDTGAVTSQD) has biased composition (polar residues). Low complexity-rich tracts occupy residues 176 to 211 (TTPA…TVVA) and 219 to 241 (TAAT…SQAG).

The protein belongs to the RodZ family.

Its subcellular location is the cell inner membrane. In terms of biological role, cytoskeletal protein that is involved in cell-shape control through regulation of the length of the long axis. In Salmonella dublin (strain CT_02021853), this protein is Cytoskeleton protein RodZ.